We begin with the raw amino-acid sequence, 29 residues long: Cyclotide mang-A (29 aa).

Positions 1 to 29 form a cross-link, cyclopeptide (Gly-Asp); the sequence is GFPTCGETCTLGTCNTPGCTCSWPICTRD. 3 disulfides stabilise this stretch: Cys5–Cys19, Cys9–Cys21, and Cys14–Cys26.

It belongs to the cyclotide family. Moebius subfamily. In terms of processing, this is a cyclic peptide.

Its function is as follows. Probably participates in a plant defense mechanism. In Melicytus angustifolius (Hymenanthera angustifolia), this protein is Cyclotide mang-A.